We begin with the raw amino-acid sequence, 601 residues long: Elongation factor 4 (601 aa).

Positions Asp-7–Lys-189 constitute a tr-type G domain. GTP-binding positions include Asp-19–Thr-24 and Asn-136–Asp-139.

It belongs to the TRAFAC class translation factor GTPase superfamily. Classic translation factor GTPase family. LepA subfamily.

It is found in the cell inner membrane. The catalysed reaction is GTP + H2O = GDP + phosphate + H(+). Functionally, required for accurate and efficient protein synthesis under certain stress conditions. May act as a fidelity factor of the translation reaction, by catalyzing a one-codon backward translocation of tRNAs on improperly translocated ribosomes. Back-translocation proceeds from a post-translocation (POST) complex to a pre-translocation (PRE) complex, thus giving elongation factor G a second chance to translocate the tRNAs correctly. Binds to ribosomes in a GTP-dependent manner. The polypeptide is Elongation factor 4 (Methylobacterium sp. (strain 4-46)).